A 174-amino-acid chain; its full sequence is uncharacterized protein (174 aa).

The helical transmembrane segment at 7-27 threads the bilayer; the sequence is LIILAIFTLWVGGFGYYLYLI.

It localises to the membrane. This is an uncharacterized protein from Rickettsia prowazekii (strain Madrid E).